Here is a 62-residue protein sequence, read N- to C-terminus: MARCRRHSRSRSRSRNQCQRRRRRRYNRRRTYRRSRRHSRRRRGRRRGCSRRRYSRRGRRRY.

A disordered region spans residues M1–Y62.

This sequence belongs to the protamine P1 family. In terms of tissue distribution, testis.

It is found in the nucleus. Its subcellular location is the chromosome. Its function is as follows. Protamines substitute for histones in the chromatin of sperm during the haploid phase of spermatogenesis. They compact sperm DNA into a highly condensed, stable and inactive complex. This is Sperm protamine P1 (PRM1) from Planigale maculata sinualis (Common planigale).